We begin with the raw amino-acid sequence, 216 residues long: Adenylate kinase (216 aa).

10–15 (GAGKGT) is a binding site for ATP. The interval 30–59 (STGDMFRAAMKAETEMGLQAKSFIDKGALV) is NMP. Residues Thr31, Arg36, 57 to 59 (ALV), 85 to 88 (GFPR), and Gln92 contribute to the AMP site. The tract at residues 126–163 (GRRICKECGATYHLEFNPPAKADVCDKCGGELYQRSDD) is LID. Arg127 serves as a coordination point for ATP. Zn(2+) contacts are provided by Cys130 and Cys133. 136 to 137 (TY) provides a ligand contact to ATP. Zn(2+) is bound by residues Cys150 and Cys153. AMP-binding residues include Arg160 and Arg171. Gln199 is an ATP binding site.

This sequence belongs to the adenylate kinase family. As to quaternary structure, monomer.

The protein resides in the cytoplasm. It catalyses the reaction AMP + ATP = 2 ADP. Its pathway is purine metabolism; AMP biosynthesis via salvage pathway; AMP from ADP: step 1/1. Its function is as follows. Catalyzes the reversible transfer of the terminal phosphate group between ATP and AMP. Plays an important role in cellular energy homeostasis and in adenine nucleotide metabolism. The chain is Adenylate kinase from Bacillus cereus (strain G9842).